The chain runs to 198 residues: Holliday junction branch migration complex subunit RuvA (198 aa).

Residues 1–63 (MYDYIKGQLT…EDAHLLFGFH (63 aa)) form a domain I region. The segment at 64–142 (TEDEKDVFLK…EAPQETGNTK (79 aa)) is domain II. The flexible linker stretch occupies residues 143 to 147 (ARSNK). The segment at 148–198 (AGNTQLDEAIEALLALGYKAAELKKIRAFFEGTSETAEQYIKSALKLLMKG) is domain III.

The protein belongs to the RuvA family. Homotetramer. Forms an RuvA(8)-RuvB(12)-Holliday junction (HJ) complex. HJ DNA is sandwiched between 2 RuvA tetramers; dsDNA enters through RuvA and exits via RuvB. An RuvB hexamer assembles on each DNA strand where it exits the tetramer. Each RuvB hexamer is contacted by two RuvA subunits (via domain III) on 2 adjacent RuvB subunits; this complex drives branch migration. In the full resolvosome a probable DNA-RuvA(4)-RuvB(12)-RuvC(2) complex forms which resolves the HJ.

Its subcellular location is the cytoplasm. Functionally, the RuvA-RuvB-RuvC complex processes Holliday junction (HJ) DNA during genetic recombination and DNA repair, while the RuvA-RuvB complex plays an important role in the rescue of blocked DNA replication forks via replication fork reversal (RFR). RuvA specifically binds to HJ cruciform DNA, conferring on it an open structure. The RuvB hexamer acts as an ATP-dependent pump, pulling dsDNA into and through the RuvAB complex. HJ branch migration allows RuvC to scan DNA until it finds its consensus sequence, where it cleaves and resolves the cruciform DNA. The protein is Holliday junction branch migration complex subunit RuvA of Streptococcus pyogenes serotype M28 (strain MGAS6180).